We begin with the raw amino-acid sequence, 562 residues long: Gut esterase 1 (562 aa).

The first 16 residues, 1 to 16, serve as a signal peptide directing secretion; sequence MRIFLVSVILINACWA. Asn-73 is a glycosylation site (N-linked (GlcNAc...) asparagine; atypical). The cysteines at positions 75 and 93 are disulfide-linked. Ser-198 acts as the Acyl-ester intermediate in catalysis. The cysteines at positions 250 and 258 are disulfide-linked. Residues Glu-319 and His-452 each act as charge relay system in the active site. The Prevents secretion from ER motif lies at 559 to 562; the sequence is KDEL.

The protein belongs to the type-B carboxylesterase/lipase family. As to expression, expressed only in the intestine.

It is found in the endoplasmic reticulum lumen. The enzyme catalyses a carboxylic ester + H2O = an alcohol + a carboxylate + H(+). This chain is Gut esterase 1 (ges-1), found in Caenorhabditis elegans.